The chain runs to 385 residues: Spermidine/putrescine import ATP-binding protein PotA (385 aa).

In terms of domain architecture, ABC transporter spans 6–238; that stretch reads IEFKNVSKVF…PINHFVATFI (233 aa). 40 to 47 is a binding site for ATP; the sequence is GSSGSGKS.

This sequence belongs to the ABC transporter superfamily. Spermidine/putrescine importer (TC 3.A.1.11.1) family. As to quaternary structure, the complex is composed of two ATP-binding proteins (PotA), two transmembrane proteins (PotB and PotC) and a solute-binding protein (PotD).

The protein localises to the cell membrane. It catalyses the reaction ATP + H2O + polyamine-[polyamine-binding protein]Side 1 = ADP + phosphate + polyamineSide 2 + [polyamine-binding protein]Side 1.. Functionally, part of the ABC transporter complex PotABCD involved in spermidine/putrescine import. Responsible for energy coupling to the transport system. The protein is Spermidine/putrescine import ATP-binding protein PotA of Streptococcus sanguinis (strain SK36).